Here is a 265-residue protein sequence, read N- to C-terminus: Type 1 encapsulin shell protein (265 aa).

The protein belongs to the encapsulin family. Family 1 subfamily. Multimeric. The encapsulin nanocompartment is formed by 60 subunits. Monomers form pentamers which assemble to form shells. There are 12 pores where the pentamers meet as well as 3-fold axis channels and dimer channels; none are larger than 3-4 Angstroms in diameter. The N-terminus of the protein is inside the shell, the C-terminus is outside. In terms of processing, the initiator methionine is partially removed. When isolated from culture filtrate isoelectric focusing gives 3 bands, none of which are glycosylated.

It localises to the encapsulin nanocompartment. It is found in the secreted. The protein resides in the cell membrane. Shell component of a type 1 encapsulin nanocompartment in situ; its cargo protects against oxidative stress at low pH. In situ and in E.coli assembles into proteinaceous shells about 22 nm in diameter with 2.5 nm thick walls. Cargo proteins are targeted to the interior via their C-terminal extensions; empty intact shells can be isolated in E.coli in the absence of cargo protein. There are at least 4 possible cargo proteins, DyP (encoded in the same locus), FolB, BfrB and Rv1762c; DyP and Rv1762c have been identified in vivo. Probably involved in protection against oxidative damage from the host immune response. A T-cell antigen found in bacterial culture cell filtrates, stimulates mouse immune response. Does not have detectable bacteriocin activity. This Mycobacterium tuberculosis (strain ATCC 25618 / H37Rv) protein is Type 1 encapsulin shell protein.